A 206-amino-acid polypeptide reads, in one-letter code: Urease accessory protein UreG (206 aa).

GTP is bound at residue 11 to 18 (GPVGSGKT).

It belongs to the SIMIBI class G3E GTPase family. UreG subfamily. In terms of assembly, homodimer. UreD, UreF and UreG form a complex that acts as a GTP-hydrolysis-dependent molecular chaperone, activating the urease apoprotein by helping to assemble the nickel containing metallocenter of UreC. The UreE protein probably delivers the nickel.

It is found in the cytoplasm. Functionally, facilitates the functional incorporation of the urease nickel metallocenter. This process requires GTP hydrolysis, probably effectuated by UreG. The chain is Urease accessory protein UreG from Mycolicibacterium gilvum (strain PYR-GCK) (Mycobacterium gilvum (strain PYR-GCK)).